Consider the following 317-residue polypeptide: tRNA dimethylallyltransferase (317 aa).

Residue 14-21 coordinates ATP; the sequence is GPTAVGKT. Residue 16–21 participates in substrate binding; the sequence is TAVGKT. The interaction with substrate tRNA stretch occupies residues 39–42; the sequence is DSMQ.

Belongs to the IPP transferase family. In terms of assembly, monomer. Mg(2+) serves as cofactor.

It carries out the reaction adenosine(37) in tRNA + dimethylallyl diphosphate = N(6)-dimethylallyladenosine(37) in tRNA + diphosphate. Its function is as follows. Catalyzes the transfer of a dimethylallyl group onto the adenine at position 37 in tRNAs that read codons beginning with uridine, leading to the formation of N6-(dimethylallyl)adenosine (i(6)A). The polypeptide is tRNA dimethylallyltransferase (Bacillus cereus (strain Q1)).